Consider the following 196-residue polypeptide: Gastrula zinc finger protein xLCGF3.1 (196 aa).

7 C2H2-type zinc fingers span residues 6–28 (FMCT…HMTH), 34–56 (FTCT…QTIH), 62–84 (FTCI…YMTH), 90–112 (FTCT…QTMH), 118–140 (LTCT…QRVH), 146–168 (FTCT…QTVH), and 174–196 (FTCT…QIVH).

This sequence belongs to the krueppel C2H2-type zinc-finger protein family.

It localises to the nucleus. May be involved in transcriptional regulation. The polypeptide is Gastrula zinc finger protein xLCGF3.1 (Xenopus laevis (African clawed frog)).